The following is a 445-amino-acid chain: Fasciclin-like arabinogalactan protein 16 (445 aa).

A signal peptide spans 1–23 (MDSSYGATKFLLLLFLTTSIATA). FAS1 domains follow at residues 35 to 173 (NSNS…ERLL) and 257 to 400 (VKDF…DGVL). N-linked (GlcNAc...) asparagine glycosylation is found at Asn-72 and Asn-279.

This sequence belongs to the fasciclin-like AGP family.

It is found in the secreted. Its function is as follows. May be a cell surface adhesion protein. The sequence is that of Fasciclin-like arabinogalactan protein 16 (FLA16) from Arabidopsis thaliana (Mouse-ear cress).